Consider the following 335-residue polypeptide: Phospho-N-acetylmuramoyl-pentapeptide-transferase (335 aa).

Helical transmembrane passes span L3 to I23, G53 to F73, S78 to L98, F118 to I138, V143 to V163, G174 to A194, F200 to N220, I226 to A246, W251 to V271, and V314 to Y334.

It belongs to the glycosyltransferase 4 family. MraY subfamily. It depends on Mg(2+) as a cofactor.

The protein localises to the cell membrane. The catalysed reaction is UDP-N-acetyl-alpha-D-muramoyl-L-alanyl-gamma-D-glutamyl-L-lysyl-D-alanyl-D-alanine + di-trans,octa-cis-undecaprenyl phosphate = Mur2Ac(oyl-L-Ala-gamma-D-Glu-L-Lys-D-Ala-D-Ala)-di-trans,octa-cis-undecaprenyl diphosphate + UMP. It participates in cell wall biogenesis; peptidoglycan biosynthesis. Its function is as follows. Catalyzes the initial step of the lipid cycle reactions in the biosynthesis of the cell wall peptidoglycan: transfers peptidoglycan precursor phospho-MurNAc-pentapeptide from UDP-MurNAc-pentapeptide onto the lipid carrier undecaprenyl phosphate, yielding undecaprenyl-pyrophosphoryl-MurNAc-pentapeptide, known as lipid I. The protein is Phospho-N-acetylmuramoyl-pentapeptide-transferase of Streptococcus equi subsp. equi (strain 4047).